Reading from the N-terminus, the 457-residue chain is Oxysterol-binding protein-related protein 3C (457 aa).

Disordered regions lie at residues 37 to 61 and 363 to 393; these read NEGV…KGRW and QGDL…KGQK. Composition is skewed to basic and acidic residues over residues 47–61 and 370–391; these read GGKE…KGRW and GSEK…ETKG.

This sequence belongs to the OSBP family. Expressed in roots, leaves, stems and flowers.

In terms of biological role, may be involved in the transport of sterols. The sequence is that of Oxysterol-binding protein-related protein 3C (ORP3C) from Arabidopsis thaliana (Mouse-ear cress).